We begin with the raw amino-acid sequence, 301 residues long: Beta carbonic anhydrase 5, chloroplastic (301 aa).

The N-terminal 56 residues, 1–56 (MAATPTHFSVSHDPFSSTSLLNLQTQAIFGPNHSLKTTQLRIPASFRRKATNLQVM), are a transit peptide targeting the chloroplast. A Phosphothreonine modification is found at Thr-65. Ser-128 is modified (phosphoserine). At Cys-231 the chain carries S-nitrosocysteine.

This sequence belongs to the beta-class carbonic anhydrase family. In terms of tissue distribution, strongly expressed in aerial tissues including leaves, stems, flowers and siliques.

The protein resides in the plastid. It localises to the chloroplast. The catalysed reaction is hydrogencarbonate + H(+) = CO2 + H2O. Reversible hydration of carbon dioxide. The chain is Beta carbonic anhydrase 5, chloroplastic (BCA5) from Arabidopsis thaliana (Mouse-ear cress).